Here is a 446-residue protein sequence, read N- to C-terminus: Sphingomyelinase phosphodiesterase C (446 aa).

Positions 1 to 26 (MKFRNNLTLYLIFIIVFTIYISLTIS) are cleaved as a signal peptide. A glycan (N-linked (GlcNAc...) asparagine) is linked at N6. The Zn(2+) site is built by D39 and H41. A disulfide bond links C56 and C78. D107 contacts Zn(2+). 2 N-linked (GlcNAc...) asparagine glycosylation sites follow: N118 and N128. N148 contributes to the Zn(2+) binding site. Residues N178, N217, N229, and N234 are each glycosylated (N-linked (GlcNAc...) asparagine). H247, H287, and H289 together coordinate Zn(2+). Residues N342 and N357 are each glycosylated (N-linked (GlcNAc...) asparagine). A disulfide bridge connects residues C429 and C442.

It belongs to the acid sphingomyelinase family. It depends on Zn(2+) as a cofactor.

The protein localises to the secreted. In Dictyostelium discoideum (Social amoeba), this protein is Sphingomyelinase phosphodiesterase C (sgmC).